A 154-amino-acid polypeptide reads, in one-letter code: Large ribosomal subunit protein uL13 (154 aa).

Belongs to the universal ribosomal protein uL13 family. Part of the 50S ribosomal subunit.

This protein is one of the early assembly proteins of the 50S ribosomal subunit, although it is not seen to bind rRNA by itself. It is important during the early stages of 50S assembly. The sequence is that of Large ribosomal subunit protein uL13 from Brucella suis (strain ATCC 23445 / NCTC 10510).